Reading from the N-terminus, the 122-residue chain is Small ribosomal subunit protein uS13 (122 aa).

Positions 95–116 are enriched in basic residues; sequence GLPVRGQKTKTNARTRKGRRKT. Residues 95-122 form a disordered region; that stretch reads GLPVRGQKTKTNARTRKGRRKTVGAATK.

This sequence belongs to the universal ribosomal protein uS13 family. Part of the 30S ribosomal subunit. Forms a loose heterodimer with protein S19. Forms two bridges to the 50S subunit in the 70S ribosome.

Its function is as follows. Located at the top of the head of the 30S subunit, it contacts several helices of the 16S rRNA. In the 70S ribosome it contacts the 23S rRNA (bridge B1a) and protein L5 of the 50S subunit (bridge B1b), connecting the 2 subunits; these bridges are implicated in subunit movement. Contacts the tRNAs in the A and P-sites. In Campylobacter curvus (strain 525.92), this protein is Small ribosomal subunit protein uS13.